Here is a 133-residue protein sequence, read N- to C-terminus: Binder of sperm protein homolog 1 (133 aa).

The signal sequence occupies residues 1–20 (MAQPLDFLLVSICLFHSLFS). Fibronectin type-II domains lie at 40–84 (TEDG…YCAL) and 85–133 (SDYA…YCIE). Disulfide bonds link Cys45/Cys69, Cys59/Cys82, Cys90/Cys116, and Cys104/Cys131. Asn72 carries N-linked (GlcNAc...) asparagine glycosylation.

It belongs to the seminal plasma protein family. Expressed only in the epididymis.

It is found in the secreted. Binds sperm in vitro and promotes sperm capacitation. Specifically promotes capacitation induced by high density lipoproteins (HDLs). Also binds heparin, phospholipid liposomes, and weakly to gelatin. Does not bind chondroitin sulfate B. The sequence is that of Binder of sperm protein homolog 1 (Bsph1) from Mus musculus (Mouse).